The sequence spans 111 residues: Cyanovirin-N homolog (111 aa).

This sequence belongs to the cyanovirin-N family.

In terms of biological role, mannose-binding lectin. The protein is Cyanovirin-N homolog of Neurospora crassa (strain ATCC 24698 / 74-OR23-1A / CBS 708.71 / DSM 1257 / FGSC 987).